Consider the following 266-residue polypeptide: Glucosamine-6-phosphate deaminase (266 aa).

The Proton acceptor; for enolization step role is filled by Asp72. The active-site For ring-opening step is Asp141. His143 functions as the Proton acceptor; for ring-opening step in the catalytic mechanism. Glu148 acts as the For ring-opening step in catalysis.

Belongs to the glucosamine/galactosamine-6-phosphate isomerase family. NagB subfamily. Homohexamer.

The catalysed reaction is alpha-D-glucosamine 6-phosphate + H2O = beta-D-fructose 6-phosphate + NH4(+). It functions in the pathway amino-sugar metabolism; N-acetylneuraminate degradation; D-fructose 6-phosphate from N-acetylneuraminate: step 5/5. Its activity is regulated as follows. Allosterically activated by N-acetylglucosamine 6-phosphate (GlcNAc6P). Functionally, catalyzes the reversible isomerization-deamination of glucosamine 6-phosphate (GlcN6P) to form fructose 6-phosphate (Fru6P) and ammonium ion. This chain is Glucosamine-6-phosphate deaminase, found in Edwardsiella ictaluri (strain 93-146).